Consider the following 102-residue polypeptide: MKDMNSIRYVFFFFSRDIKSCFYKVRSYLNLLLILEAILCPVDSLISIPNGIMVVSEPDSPFSHSNPSRRLFRKVNPSSCLSVLYLDLCCSGLIIAEAGIGG.

2 helical membrane-spanning segments follow: residues 28 to 48 (YLNL…LISI) and 81 to 101 (LSVL…AGIG).

It localises to the membrane. This is an uncharacterized protein from Saccharomyces cerevisiae (strain ATCC 204508 / S288c) (Baker's yeast).